Consider the following 105-residue polypeptide: Large ribosomal subunit protein bL21 (105 aa).

Belongs to the bacterial ribosomal protein bL21 family. Part of the 50S ribosomal subunit. Contacts protein L20.

Its function is as follows. This protein binds to 23S rRNA in the presence of protein L20. In Bacteroides fragilis (strain YCH46), this protein is Large ribosomal subunit protein bL21.